A 517-amino-acid polypeptide reads, in one-letter code: Glutamyl-tRNA(Gln) amidotransferase subunit A, mitochondrial (517 aa).

Catalysis depends on charge relay system residues lysine 58 and serine 131. The segment at 106–132 (FGMGTHSTHSAHGPVASPAGRSAGGSS) is disordered. Serine 155 (acyl-ester intermediate) is an active-site residue.

It belongs to the amidase family. GatA subfamily. Subunit of the heterotrimeric GatCAB amidotransferase (AdT) complex, composed of A, B and C subunits.

It localises to the mitochondrion. It catalyses the reaction L-glutamyl-tRNA(Gln) + L-glutamine + ATP + H2O = L-glutaminyl-tRNA(Gln) + L-glutamate + ADP + phosphate + H(+). Functionally, allows the formation of correctly charged Gln-tRNA(Gln) through the transamidation of misacylated Glu-tRNA(Gln) in the mitochondria. The reaction takes place in the presence of glutamine and ATP through an activated gamma-phospho-Glu-tRNA(Gln). The chain is Glutamyl-tRNA(Gln) amidotransferase subunit A, mitochondrial from Pyricularia oryzae (strain 70-15 / ATCC MYA-4617 / FGSC 8958) (Rice blast fungus).